Consider the following 213-residue polypeptide: Ubiquitin-conjugating enzyme E2 S (213 aa).

One can recognise a UBC core domain in the interval 13-159; the sequence is QIIRQVAKEV…ARMMTEIHAK (147 aa). Catalysis depends on cysteine 97, which acts as the Glycyl thioester intermediate. Residues 157-213 form a disordered region; it reads HAKPTTKTAPTKNEETNCPSTSGTQSTSEGPMAKKHAGDKNAAEKKKKEKKRALRRL. Residues 174–185 show a composition bias toward polar residues; that stretch reads CPSTSGTQSTSE. Basic and acidic residues predominate over residues 192–202; the sequence is HAGDKNAAEKK. Basic residues predominate over residues 203–213; that stretch reads KKEKKRALRRL.

This sequence belongs to the ubiquitin-conjugating enzyme family.

It carries out the reaction S-ubiquitinyl-[E1 ubiquitin-activating enzyme]-L-cysteine + [E2 ubiquitin-conjugating enzyme]-L-cysteine = [E1 ubiquitin-activating enzyme]-L-cysteine + S-ubiquitinyl-[E2 ubiquitin-conjugating enzyme]-L-cysteine.. Its pathway is protein modification; protein ubiquitination. Its function is as follows. Catalyzes the covalent attachment of ubiquitin to other proteins. Acts as an essential factor of the anaphase promoting complex/cyclosome (APC/C), a cell cycle-regulated ubiquitin ligase that controls progression through mitosis. Acts by specifically elongating polyubiquitin chains initiated by the E2 enzyme UBCH10 on APC/C substrates, enhancing the degradation of APC/C substrates by the proteasome and promoting mitotic exit. The polypeptide is Ubiquitin-conjugating enzyme E2 S (Branchiostoma floridae (Florida lancelet)).